Reading from the N-terminus, the 353-residue chain is Protein RecA (353 aa).

An ATP-binding site is contributed by 67–74; the sequence is GPESSGKT.

Belongs to the RecA family.

The protein resides in the cytoplasm. In terms of biological role, can catalyze the hydrolysis of ATP in the presence of single-stranded DNA, the ATP-dependent uptake of single-stranded DNA by duplex DNA, and the ATP-dependent hybridization of homologous single-stranded DNAs. It interacts with LexA causing its activation and leading to its autocatalytic cleavage. The sequence is that of Protein RecA from Salmonella agona (strain SL483).